A 335-amino-acid polypeptide reads, in one-letter code: Glyceraldehyde-3-phosphate dehydrogenase (335 aa).

Residues 12–13 (RI), Asp34, Arg78, and Ser120 each bind NAD(+). D-glyceraldehyde 3-phosphate-binding positions include 151–153 (SCT) and Thr182. Catalysis depends on Cys152, which acts as the Nucleophile. An NAD(+)-binding site is contributed by Asn183. D-glyceraldehyde 3-phosphate-binding positions include Arg197, 210–211 (TG), and Arg233. Asn315 contacts NAD(+).

The protein belongs to the glyceraldehyde-3-phosphate dehydrogenase family. As to quaternary structure, homotetramer.

It is found in the cytoplasm. It carries out the reaction D-glyceraldehyde 3-phosphate + phosphate + NAD(+) = (2R)-3-phospho-glyceroyl phosphate + NADH + H(+). The protein operates within carbohydrate degradation; glycolysis; pyruvate from D-glyceraldehyde 3-phosphate: step 1/5. Catalyzes the oxidative phosphorylation of glyceraldehyde 3-phosphate (G3P) to 1,3-bisphosphoglycerate (BPG) using the cofactor NAD. The first reaction step involves the formation of a hemiacetal intermediate between G3P and a cysteine residue, and this hemiacetal intermediate is then oxidized to a thioester, with concomitant reduction of NAD to NADH. The reduced NADH is then exchanged with the second NAD, and the thioester is attacked by a nucleophilic inorganic phosphate to produce BPG. The polypeptide is Glyceraldehyde-3-phosphate dehydrogenase (gap) (Priestia megaterium (strain DSM 319 / IMG 1521) (Bacillus megaterium)).